A 266-amino-acid polypeptide reads, in one-letter code: L-aspartate dehydrogenase (266 aa).

Positions 123 and 189 each coordinate NAD(+). Residue histidine 219 is part of the active site.

The protein belongs to the L-aspartate dehydrogenase family.

It catalyses the reaction L-aspartate + NADP(+) + H2O = oxaloacetate + NH4(+) + NADPH + H(+). It carries out the reaction L-aspartate + NAD(+) + H2O = oxaloacetate + NH4(+) + NADH + H(+). The protein operates within cofactor biosynthesis; NAD(+) biosynthesis; iminoaspartate from L-aspartate (dehydrogenase route): step 1/1. Its function is as follows. Specifically catalyzes the NAD or NADP-dependent dehydrogenation of L-aspartate to iminoaspartate. This chain is L-aspartate dehydrogenase, found in Cupriavidus taiwanensis (strain DSM 17343 / BCRC 17206 / CCUG 44338 / CIP 107171 / LMG 19424 / R1) (Ralstonia taiwanensis (strain LMG 19424)).